Reading from the N-terminus, the 2289-residue chain is Protein Ycf2 (2289 aa).

1643-1650 (GSIGTGRS) contributes to the ATP binding site.

It belongs to the Ycf2 family.

It localises to the plastid. It is found in the chloroplast stroma. Functionally, probable ATPase of unknown function. Its presence in a non-photosynthetic plant (Epifagus virginiana) and experiments in tobacco indicate that it has an essential function which is probably not related to photosynthesis. This Capsella bursa-pastoris (Shepherd's purse) protein is Protein Ycf2.